The sequence spans 313 residues: Monoglyceride lipase (313 aa).

The GXSXG motif lies at 121-125 (GHSMG). The active-site Nucleophile is the serine 123. Catalysis depends on charge relay system residues aspartate 251 and histidine 281.

The protein belongs to the AB hydrolase superfamily. Monoacylglycerol lipase family.

The protein localises to the lipid droplet. It is found in the cytoplasm. The protein resides in the endoplasmic reticulum. It localises to the mitochondrion outer membrane. The enzyme catalyses Hydrolyzes glycerol monoesters of long-chain fatty acids.. It catalyses the reaction a fatty acid ethyl ester + H2O = ethanol + a fatty acid + H(+). The catalysed reaction is 1-(9Z-octadecenoyl)-glycerol + H2O = glycerol + (9Z)-octadecenoate + H(+). It carries out the reaction 2-(9Z-octadecenoyl)-glycerol + H2O = glycerol + (9Z)-octadecenoate + H(+). The enzyme catalyses 1-hexadecanoylglycerol + H2O = glycerol + hexadecanoate + H(+). It catalyses the reaction 2-hexadecanoylglycerol + H2O = glycerol + hexadecanoate + H(+). The catalysed reaction is ethyl hexadecanoate + H2O = ethanol + hexadecanoate + H(+). It carries out the reaction ethyl (9Z)-octadecenoate + H2O = ethanol + (9Z)-octadecenoate + H(+). The enzyme catalyses ethyl (9Z)-hexadecenoate + H2O = (9Z)-hexadecenoate + ethanol + H(+). It catalyses the reaction ethyl octadecanoate + H2O = ethanol + octadecanoate + H(+). Its pathway is glycerolipid metabolism; triacylglycerol degradation. In terms of biological role, converts monoacylglycerides (MAG) to free fatty acids and glycerol. Has a strong preference for monounsaturated monoglycerides. Required for efficient degradation of MAG, short-lived intermediates of glycerolipid metabolism which may also function as lipid signaling molecules. Controls inactivation of the signaling lipid N-palmitoylethanolamine (PEA). Involved in fatty acid ethyl ester (FAEE) catabolism. FAEEs are non-oxidative metabolites of ethanol that are transiently incorporated into lipid droplets (LDs). Their mobilization by LD-resident FAEE hydrolases facilitates a controlled metabolism of these potentially toxic lipid metabolites. This chain is Monoglyceride lipase (YJU3), found in Saccharomyces cerevisiae (strain ATCC 204508 / S288c) (Baker's yeast).